The following is a 293-amino-acid chain: 4-hydroxy-tetrahydrodipicolinate synthase (293 aa).

Residue Thr45 coordinates pyruvate. Tyr133 functions as the Proton donor/acceptor in the catalytic mechanism. Catalysis depends on Lys161, which acts as the Schiff-base intermediate with substrate. Position 203 (Ile203) interacts with pyruvate.

Belongs to the DapA family. As to quaternary structure, homotetramer; dimer of dimers.

It localises to the cytoplasm. It catalyses the reaction L-aspartate 4-semialdehyde + pyruvate = (2S,4S)-4-hydroxy-2,3,4,5-tetrahydrodipicolinate + H2O + H(+). It functions in the pathway amino-acid biosynthesis; L-lysine biosynthesis via DAP pathway; (S)-tetrahydrodipicolinate from L-aspartate: step 3/4. Its function is as follows. Catalyzes the condensation of (S)-aspartate-beta-semialdehyde [(S)-ASA] and pyruvate to 4-hydroxy-tetrahydrodipicolinate (HTPA). The polypeptide is 4-hydroxy-tetrahydrodipicolinate synthase (Syntrophotalea carbinolica (strain DSM 2380 / NBRC 103641 / GraBd1) (Pelobacter carbinolicus)).